A 347-amino-acid polypeptide reads, in one-letter code: Ribosomal RNA small subunit methyltransferase C (347 aa).

The protein belongs to the methyltransferase superfamily. RsmC family. As to quaternary structure, monomer.

It is found in the cytoplasm. The catalysed reaction is guanosine(1207) in 16S rRNA + S-adenosyl-L-methionine = N(2)-methylguanosine(1207) in 16S rRNA + S-adenosyl-L-homocysteine + H(+). In terms of biological role, specifically methylates the guanine in position 1207 of 16S rRNA in the 30S particle. In Shewanella putrefaciens (strain CN-32 / ATCC BAA-453), this protein is Ribosomal RNA small subunit methyltransferase C.